Reading from the N-terminus, the 795-residue chain is Protocadherin beta-5 (795 aa).

The N-terminal stretch at 1-30 is a signal peptide; sequence METALAKTPQKRQVMFLAILLLLWEAGSEA. The Extracellular portion of the chain corresponds to 31–689; that stretch reads VRYSIPEETE…AQADSLTVYL (659 aa). 5 consecutive Cadherin domains span residues 35–133, 138–242, 247–346, 351–450, and 455–560; these read IPEE…SPEF, MLLK…APEF, YEVQ…APEL, LSSP…APAF, and YTLF…SPFV. Asparagine 169 carries an N-linked (GlcNAc...) asparagine glycan. Residue lysine 296 is modified to N6-acetyllysine. N-linked (GlcNAc...) asparagine glycosylation is found at asparagine 417 and asparagine 435. An N-linked (GlcNAc...) asparagine glycan is attached at asparagine 566. Residues 567-670 enclose the Cadherin 6 domain; it reads GSAPCTELVP…LVDGFSQPYL (104 aa). The helical transmembrane segment at 690-710 threads the bilayer; sequence VVALASVSSLFLFSVLLFVAV. Topologically, residues 711-795 are cytoplasmic; that stretch reads RLCRRSRAAP…AAFRNSFGLN (85 aa).

Its subcellular location is the cell membrane. In terms of biological role, potential calcium-dependent cell-adhesion protein. May be involved in the establishment and maintenance of specific neuronal connections in the brain. The sequence is that of Protocadherin beta-5 (PCDHB5) from Pan troglodytes (Chimpanzee).